Reading from the N-terminus, the 265-residue chain is Tryptophan 2,3-dioxygenase (265 aa).

Substrate is bound by residues 38–42 (FIVVH) and arginine 104. Histidine 223 contributes to the heme binding site. Threonine 237 is a substrate binding site.

It belongs to the tryptophan 2,3-dioxygenase family. In terms of assembly, homotetramer. The cofactor is heme.

The catalysed reaction is L-tryptophan + O2 = N-formyl-L-kynurenine. It functions in the pathway amino-acid degradation; L-tryptophan degradation via kynurenine pathway; L-kynurenine from L-tryptophan: step 1/2. Heme-dependent dioxygenase that catalyzes the oxidative cleavage of the L-tryptophan (L-Trp) pyrrole ring and converts L-tryptophan to N-formyl-L-kynurenine. Catalyzes the oxidative cleavage of the indole moiety. The polypeptide is Tryptophan 2,3-dioxygenase (Anaeromyxobacter sp. (strain K)).